The primary structure comprises 255 residues: Probable transcriptional regulator ycf27 (255 aa).

The 114-residue stretch at 9-122 (KILIADDESS…ELEARIRCVL (114 aa)) folds into the Response regulatory domain. Asp58 carries the post-translational modification 4-aspartylphosphate. The segment at residues 78–96 (DIPIIMLTALGDVTDRITG) is a DNA-binding region (H-T-H motif). The segment at residues 137 to 238 (SGIINIGFLK…SRGTGYLFQR (102 aa)) is a DNA-binding region (ompR/PhoB-type).

Its subcellular location is the plastid. The protein resides in the chloroplast. Its function is as follows. Probable promoter-specific protein mediating the interaction between DNA and RNA polymerase. The sequence is that of Probable transcriptional regulator ycf27 (ycf27) from Galdieria sulphuraria (Red alga).